We begin with the raw amino-acid sequence, 233 residues long: Protein lin-7 homolog A (233 aa).

Residues 25-80 (LDRDVARAIELLEKLQESGEVPVHKLQSLKKVLQSEFCTAIREVYQYMHETITVNG) form the L27 domain. One can recognise a PDZ domain in the interval 108–190 (VVELPKTDEG…SVKLVVRYTP (83 aa)).

This sequence belongs to the lin-7 family. In terms of assembly, forms a complex with CASK and CASKIN1. Component of the brain-specific heterotrimeric complex (LIN-10-LIN-2-LIN-7 complex) composed of at least APBA1, CASK, and LIN7, which associates with the motor protein KIF17 to transport vesicles along microtubules. Can also interact with other modular proteins containing protein-protein interaction domains like PALS1, PALS2, MPP7, DLG1, DLG2 and DLG3 through its L27 domain. Interacts with DLG4, GRIN2B and MARCHF11 as well as CDH1 and CTNNB1, the channels KCNJ12/Kir2.2, KCNJ4/Kir2.3 and probably KCNJ2/Kir2.1 and SLC6A12/BGT-1 via its PDZ domain. The association of LIN7A with cadherin and beta-catenin is calcium-dependent, occurs at synaptic junctions and requires the actin cytoskeleton. Interacts with EGFR, ERBB2, ERBB3 and ERBB4 with both PDZ and KID domains. Associates with KIF17 via APBA1. Interacts with HTR4. Forms a tripartite complex composed of DLG1, MPP7 and LIN7 (LIN7A or LIN7C).

Its subcellular location is the cell membrane. It is found in the basolateral cell membrane. It localises to the cell junction. The protein resides in the postsynaptic density membrane. The protein localises to the tight junction. Plays a role in establishing and maintaining the asymmetric distribution of channels and receptors at the plasma membrane of polarized cells. Forms membrane-associated multiprotein complexes that may regulate delivery and recycling of proteins to the correct membrane domains. The tripartite complex composed of LIN7 (LIN7A, LIN7B or LIN7C), CASK and APBA1 associates with the motor protein KIF17 to transport vesicles containing N-methyl-D-aspartate (NMDA) receptor subunit NR2B along microtubules. This complex may have the potential to couple synaptic vesicle exocytosis to cell adhesion in brain. Ensures the proper localization of GRIN2B (subunit 2B of the NMDA receptor) to neuronal postsynaptic density and may function in localizing synaptic vesicles at synapses where it is recruited by beta-catenin and cadherin. Required to localize Kir2 channels, GABA transporter (SLC6A12) and EGFR/ERBB1, ERBB2, ERBB3 and ERBB4 to the basolateral membrane of epithelial cells. This chain is Protein lin-7 homolog A (LIN7A), found in Bos taurus (Bovine).